The chain runs to 243 residues: Biosynthetic peptidoglycan transglycosylase (243 aa).

The chain crosses the membrane as a helical span at residues 21–43 (LLIVSLVSALMSVLQVIVFRFVD).

Belongs to the glycosyltransferase 51 family.

The protein resides in the cell inner membrane. It catalyses the reaction [GlcNAc-(1-&gt;4)-Mur2Ac(oyl-L-Ala-gamma-D-Glu-L-Lys-D-Ala-D-Ala)](n)-di-trans,octa-cis-undecaprenyl diphosphate + beta-D-GlcNAc-(1-&gt;4)-Mur2Ac(oyl-L-Ala-gamma-D-Glu-L-Lys-D-Ala-D-Ala)-di-trans,octa-cis-undecaprenyl diphosphate = [GlcNAc-(1-&gt;4)-Mur2Ac(oyl-L-Ala-gamma-D-Glu-L-Lys-D-Ala-D-Ala)](n+1)-di-trans,octa-cis-undecaprenyl diphosphate + di-trans,octa-cis-undecaprenyl diphosphate + H(+). It participates in cell wall biogenesis; peptidoglycan biosynthesis. In terms of biological role, peptidoglycan polymerase that catalyzes glycan chain elongation from lipid-linked precursors. The chain is Biosynthetic peptidoglycan transglycosylase from Xylella fastidiosa (strain Temecula1 / ATCC 700964).